The chain runs to 544 residues: Potential vesicular glutamate transporter vglu-3 (544 aa).

Over 1–49 (MPNGSIRNCANAVADTVRQTFSRKTWEHKEQLQTITEQKKFFLRKVRWQ) the chain is Cytoplasmic. The chain crosses the membrane as a helical span at residues 50–70 (IAILAHFGFAISFGIRSNFGV). Topologically, residues 71–104 (AKNRMVNNFTDAYGEVHEREFLWTGAEVGMMESS) are extracellular. An N-linked (GlcNAc...) asparagine glycan is attached at Asn78. A helical membrane pass occupies residues 105 to 125 (FFYGYAASQIPAGVLAAKFAP). At 126 to 127 (NK) the chain is on the cytoplasmic side. Residues 128–148 (IFMLGILVASFMNILSAISFN) form a helical membrane-spanning segment. Residues 149–154 (FHPYTD) are Extracellular-facing. Residues 155-175 (IFVMVVQAVQGLALGVLYPAM) traverse the membrane as a helical segment. Topologically, residues 176-193 (HGVWKFWAPPLERSKLAT) are cytoplasmic. The helical transmembrane segment at 194–214 (TAFTGSSVGVMTGLPASAYLV) threads the bilayer. Residues 215 to 219 (SHFSW) lie on the Extracellular side of the membrane. The chain crosses the membrane as a helical span at residues 220–240 (STPFYVFGVVGIIWSLIWMYV). Residues 241-285 (SSHSPETHGYISDDEKKQVTEKIGDVAVKNMSLTTLPWRDMMTSS) lie on the Cytoplasmic side of the membrane. The helical transmembrane segment at 286–306 (AVWAIIICTFCRSWGFFLLLG) threads the bilayer. At 307–323 (NQLTYMKDVLHIDIKNS) the chain is on the extracellular side. Residues 324 to 344 (GFISIFPQFGMCIVTLATGQL) traverse the membrane as a helical segment. Residues 345–360 (CDYLRSSGKMSTEAVR) are Cytoplasmic-facing. A helical transmembrane segment spans residues 361–381 (KSVNTFGFTVEAMMLGCLAFV). Residues 382–384 (RDP) are Extracellular-facing. A helical membrane pass occupies residues 385–405 (VIAVTCLVIACTGSGSVLSGF). At 406 to 416 (NVNHFDIAPRY) the chain is on the cytoplasmic side. A helical membrane pass occupies residues 417–437 (APILMGIANGLGAVAGVGGMV). Residues 438 to 450 (TNTVTYQNPDGWK) lie on the Extracellular side of the membrane. The helical transmembrane segment at 451-471 (WVFLLAMAIDIFGVIFFLIFA) threads the bilayer. Residues 472–544 (KGDVLPWARE…APAEKSESSS (73 aa)) are Cytoplasmic-facing. Residues 501-544 (SLSRKTRNREGDTSYEKMEEDSEMKPCSKKVEARAPAEKSESSS) form a disordered region. The span at 508–544 (NREGDTSYEKMEEDSEMKPCSKKVEARAPAEKSESSS) shows a compositional bias: basic and acidic residues.

The protein belongs to the major facilitator superfamily. Sodium/anion cotransporter family. VGLUT subfamily.

It localises to the membrane. The chain is Potential vesicular glutamate transporter vglu-3 (vglu-3) from Caenorhabditis elegans.